A 118-amino-acid polypeptide reads, in one-letter code: Protein MGF 110-6L (118 aa).

The first 18 residues, 1-18 (MLVTFLGILGLLASQVSS), serve as a signal peptide directing secretion. The Prevents secretion from ER motif lies at 115-118 (KDEL).

This sequence belongs to the asfivirus MGF 110 family. In terms of processing, N-glycosylated.

Its subcellular location is the host endoplasmic reticulum lumen. Its function is as follows. Plays a role in virus cell tropism, and may be required for efficient virus replication in macrophages. In Ornithodoros (relapsing fever ticks), this protein is Protein MGF 110-6L.